Here is a 337-residue protein sequence, read N- to C-terminus: GTP 3',8-cyclase (337 aa).

Residues 17–242 enclose the Radical SAM core domain; that stretch reads AFQRRYYYLR…QSKGLLDGPA (226 aa). GTP is bound at residue arginine 26. [4Fe-4S] cluster contacts are provided by cysteine 33 and cysteine 37. S-adenosyl-L-methionine is bound at residue tyrosine 39. A [4Fe-4S] cluster-binding site is contributed by cysteine 40. Residue arginine 76 coordinates GTP. Glycine 80 is an S-adenosyl-L-methionine binding site. Threonine 107 contributes to the GTP binding site. S-adenosyl-L-methionine is bound at residue serine 131. Lysine 168 contributes to the GTP binding site. Methionine 202 contributes to the S-adenosyl-L-methionine binding site. [4Fe-4S] cluster-binding residues include cysteine 265 and cysteine 268. 270–272 contributes to the GTP binding site; it reads RLR. Residue cysteine 282 participates in [4Fe-4S] cluster binding.

It belongs to the radical SAM superfamily. MoaA family. As to quaternary structure, monomer and homodimer. [4Fe-4S] cluster serves as cofactor.

It catalyses the reaction GTP + AH2 + S-adenosyl-L-methionine = (8S)-3',8-cyclo-7,8-dihydroguanosine 5'-triphosphate + 5'-deoxyadenosine + L-methionine + A + H(+). The protein operates within cofactor biosynthesis; molybdopterin biosynthesis. Functionally, catalyzes the cyclization of GTP to (8S)-3',8-cyclo-7,8-dihydroguanosine 5'-triphosphate. This is GTP 3',8-cyclase from Pasteurella multocida (strain Pm70).